The primary structure comprises 152 residues: Superoxide dismutase [Cu-Zn] 2 (152 aa).

His45, His47, and His62 together coordinate Cu cation. Cys56 and Cys145 form a disulfide bridge. Residues His62, His70, His79, and Asp82 each coordinate Zn(2+). His119 serves as a coordination point for Cu cation.

It belongs to the Cu-Zn superoxide dismutase family. Homodimer. Requires Cu cation as cofactor. The cofactor is Zn(2+).

The protein resides in the cytoplasm. The enzyme catalyses 2 superoxide + 2 H(+) = H2O2 + O2. Functionally, destroys radicals which are normally produced within the cells and which are toxic to biological systems. This is Superoxide dismutase [Cu-Zn] 2 (SODCC2) from Oryza sativa subsp. japonica (Rice).